A 360-amino-acid chain; its full sequence is GTPase Obg (360 aa).

The region spanning 1–156 is the Obg domain; sequence MFVDSVEIII…KCVRLELKLI (156 aa). The OBG-type G domain occupies 157 to 360; that stretch reads ADIGLVGFPN…LKFVLLEALP (204 aa). Residues 163-170, 188-192, 210-213, 279-282, and 341-343 contribute to the GTP site; these read GFPNAGKS, FTTLV, DIPG, NKCD, and SAV. Residues Ser170 and Thr190 each coordinate Mg(2+).

Belongs to the TRAFAC class OBG-HflX-like GTPase superfamily. OBG GTPase family. Monomer. Requires Mg(2+) as cofactor.

Its subcellular location is the cytoplasm. An essential GTPase which binds GTP, GDP and possibly (p)ppGpp with moderate affinity, with high nucleotide exchange rates and a fairly low GTP hydrolysis rate. Plays a role in control of the cell cycle, stress response, ribosome biogenesis and in those bacteria that undergo differentiation, in morphogenesis control. This Helicobacter acinonychis (strain Sheeba) protein is GTPase Obg.